A 310-amino-acid chain; its full sequence is Ribosomal RNA small subunit methyltransferase H (310 aa).

S-adenosyl-L-methionine-binding positions include 33–35 (AGH), D53, F79, D100, and Q107.

Belongs to the methyltransferase superfamily. RsmH family.

Its subcellular location is the cytoplasm. It catalyses the reaction cytidine(1402) in 16S rRNA + S-adenosyl-L-methionine = N(4)-methylcytidine(1402) in 16S rRNA + S-adenosyl-L-homocysteine + H(+). In terms of biological role, specifically methylates the N4 position of cytidine in position 1402 (C1402) of 16S rRNA. In Clostridium perfringens (strain 13 / Type A), this protein is Ribosomal RNA small subunit methyltransferase H.